Consider the following 1176-residue polypeptide: Chromosome partition protein Smc (1176 aa).

32–39 provides a ligand contact to ATP; the sequence is PNGCGKSN. Residues 169 to 506 are a coiled coil; it reads GVSRYKERRR…VKLQEDVQKQ (338 aa). Positions 521 to 623 constitute an SMC hinge domain; it reads LGRLWQKLHI…TAPDLGQALA (103 aa). Coiled-coil stretches lie at residues 653–947 and 987–1024; these read DSEQ…LAAM and ERKE…LQAT.

This sequence belongs to the SMC family. Homodimer.

The protein localises to the cytoplasm. Functionally, required for chromosome condensation and partitioning. The sequence is that of Chromosome partition protein Smc from Bordetella petrii (strain ATCC BAA-461 / DSM 12804 / CCUG 43448).